A 378-amino-acid chain; its full sequence is MKNFNLLVVSSILLVDLFPTNCGHNVHFSRAINLNGVSFNNVDASSLGAAQVRQSASRGRGLGENPKDEEGADKPKKKEEKKVEPKKPRENKLKQPPAGDGAPEGDGAPAAPAGDGAPAAPAGDGAPAAPAGDGAPAAPAGDGAPAAPAGDGAPAAPAGDGAPAAPAGDGAPAAPAGDGAPAAPAGDGAPAGNRAGGQPAAGGNQAGGNRAGGQPAAGGNQAGGNRAGGQPAAGGNQAGGQPAAGGNQAGAQAGGNQAGAQAGGANAGNKKAGEAGGNAGAGQGQNNEAANVPNAKLVKEYLDKIRSTLGVEWSPCSVTCGKGVRMRRKVSAANKKPEELDVNDLETEVCTMDKCAGIFNVVSNSLRLVILLVLALFN.

Positions 1 to 22 (MKNFNLLVVSSILLVDLFPTNC) are cleaved as a signal peptide. A disordered region spans residues 50–288 (AQVRQSASRG…AGAGQGQNNE (239 aa)). The span at 65 to 93 (NPKDEEGADKPKKKEEKKVEPKKPRENKL) shows a compositional bias: basic and acidic residues. The tract at residues 81–89 (KKVEPKKPR) is required for the binding to heparan sulfate proteoglycans (HSPGs) on the surface of host hepatocytes. Residues 92–96 (KLKQP) are region I; contains the proteolytic cleavage site. Low complexity predominate over residues 96 to 203 (PPAGDGAPEG…RAGGQPAAGG (108 aa)). Residues 97–102 (PAGDGA) form a 1-1; truncated repeat. The interval 97-191 (PAGDGAPEGD…AAPAGDGAPA (95 aa)) is 11 X 9 AA tandem repeats of P-[AE]-G-D-G-A-P-A-[AG]. 13 tandem repeats follow at residues 103 to 111 (PEGDGAPAA), 112 to 120 (PAGDGAPAA), 121 to 129 (PAGDGAPAA), 130 to 138 (PAGDGAPAA), 139 to 147 (PAGDGAPAA), 148 to 156 (PAGDGAPAA), 157 to 165 (PAGDGAPAA), 166 to 174 (PAGDGAPAA), 175 to 183 (PAGDGAPAA), 184 to 191 (PAGDGAPA), 193 to 208 (NRAG…QAGG), 209 to 224 (NRAG…QAGG), and 225 to 240 (NRAG…QAGG). The interval 193–268 (NRAGGQPAAG…GAQAGGANAG (76 aa)) is 6 X 16 AA approximate tandem repeats of N-R-A-G-G-Q-P-A-A-G-G-N-Q-A-G-G. Over residues 228-251 (GGQPAAGGNQAGGQPAAGGNQAGA) the composition is skewed to low complexity. Residues 241 to 251 (QPAAGGNQAGA) form a 2-4; approximate; truncated repeat. The 2-5; approximate; truncated repeat unit spans residues 252 to 260 (QAGGNQAGA). Composition is skewed to gly residues over residues 252-266 (QAGG…GGAN) and 274-283 (EAGGNAGAGQ). The 2-6; approximate; truncated repeat unit spans residues 261-268 (QAGGANAG). The 53-residue stretch at 304–356 (KIRSTLGVEWSPCSVTCGKGVRMRRKVSAANKKPEELDVNDLETEVCTMDKCA) folds into the TSP type-1 domain. Disulfide bonds link cysteine 316/cysteine 350 and cysteine 320/cysteine 355. An O-linked (Fuc) threonine glycan is attached at threonine 319. A lipid anchor (GPI-anchor amidated cysteine) is attached at cysteine 355. Residues 356-378 (AGIFNVVSNSLRLVILLVLALFN) constitute a propeptide, removed in mature form.

This sequence belongs to the plasmodium circumsporozoite protein family. In terms of processing, during host cell invasion, proteolytically cleaved at the cell membrane in the region I by a papain-like cysteine protease of parasite origin. Cleavage is triggered by the sporozoite contact with highly sulfated heparan sulfate proteoglycans (HSPGs) present on the host hepatocyte cell surface. Cleavage exposes the TSP type-1 (TSR) domain and is required for productive invasion of host hepatocytes but not for adhesion to the host cell membrane. Cleavage is dispensable for sporozoite development in the oocyst, motility and for traversal of host and vector cells. Post-translationally, O-glycosylated; maybe by POFUT2.

Its subcellular location is the cell membrane. It localises to the cytoplasm. Its function is as follows. Essential sporozoite protein. In the mosquito vector, required for sporozoite development in the oocyst, migration through the vector hemolymph and entry into the vector salivary glands. In the vertebrate host, required for sporozoite migration through the host dermis and infection of host hepatocytes. Binds to highly sulfated heparan sulfate proteoglycans (HSPGs) on the surface of host hepatocytes. Functionally, in the vertebrate host, binds to highly sulfated heparan sulfate proteoglycans (HSPGs) on the surface of host hepatocytes and is required for sporozoite invasion of the host hepatocytes. The sequence is that of Circumsporozoite protein from Plasmodium cynomolgi (strain Berok).